We begin with the raw amino-acid sequence, 1159 residues long: PAN2-PAN3 deadenylation complex catalytic subunit pan2 (1159 aa).

The stretch at 276–315 (ANVSFMLGIDISPSGEALAINDAECMVHLWGSPAKIHFNE) is one WD repeat. The linker stretch occupies residues 316 to 451 (MSKEVELADV…GAKLNGEAED (136 aa)). The 370-residue stretch at 452 to 821 (DPLLKYSNVE…VPCVLAFQVK (370 aa)) folds into the USP domain. Residues 872 to 1048 (LDTEFVDLEK…IEDARMALRL (177 aa)) enclose the Exonuclease domain. The a divalent metal cation site is built by Asp873, Glu875, Asp982, and Asp1041. The disordered stretch occupies residues 1094–1159 (TAVTMQNTNS…GDFFGGSPLK (66 aa)). Over residues 1096 to 1106 (VTMQNTNSGRN) the composition is skewed to polar residues. The segment covering 1107-1128 (TPTVPDAAGAPAVPASAPTTPG) has biased composition (low complexity). The segment covering 1143-1153 (TFSGPGAGDFF) has biased composition (gly residues).

The protein belongs to the peptidase C19 family. PAN2 subfamily. In terms of assembly, forms a heterotrimer with an asymmetric homodimer of the regulatory subunit pan3 to form the poly(A)-nuclease (PAN) deadenylation complex. The cofactor is a divalent metal cation.

The protein resides in the cytoplasm. The enzyme catalyses Exonucleolytic cleavage of poly(A) to 5'-AMP.. With respect to regulation, positively regulated by the regulatory subunit pan3. In terms of biological role, catalytic subunit of the poly(A)-nuclease (PAN) deadenylation complex, one of two cytoplasmic mRNA deadenylases involved in mRNA turnover. PAN specifically shortens poly(A) tails of RNA and the activity is stimulated by poly(A)-binding protein pab1. PAN deadenylation is followed by rapid degradation of the shortened mRNA tails by the CCR4-NOT complex. Deadenylated mRNAs are then degraded by two alternative mechanisms, namely exosome-mediated 3'-5' exonucleolytic degradation, or deadenylation-dependent mRNA decaping and subsequent 5'-3' exonucleolytic degradation by xrn1. May also be involved in post-transcriptional maturation of mRNA poly(A) tails. This chain is PAN2-PAN3 deadenylation complex catalytic subunit pan2, found in Aspergillus terreus (strain NIH 2624 / FGSC A1156).